Consider the following 436-residue polypeptide: Aminopeptidase C (436 aa).

Residues C68, H356, and N378 contribute to the active site.

Belongs to the peptidase C1 family. As to quaternary structure, homohexamer.

It catalyses the reaction Inactivates bleomycin B2 (a cytotoxic glycometallopeptide) by hydrolysis of a carboxyamide bond of beta-aminoalanine, but also shows general aminopeptidase activity. The specificity varies somewhat with source, but amino acid arylamides of Met, Leu and Ala are preferred.. In terms of biological role, hydrolyzes naphthylamide-substituted amino acids as well as di- and tripeptides in which the half-cystine residue is involved in a disulfide loop, notably in oxytocin and vasopressin. Also has a bleomycin hydrolase activity. This is Aminopeptidase C (pepC) from Lactococcus lactis subsp. cremoris (Streptococcus cremoris).